We begin with the raw amino-acid sequence, 163 residues long: Glutathione peroxidase 1 (163 aa).

C36 is a catalytic residue.

The protein belongs to the glutathione peroxidase family.

The protein localises to the cytoplasm. The catalysed reaction is 2 glutathione + H2O2 = glutathione disulfide + 2 H2O. Functionally, may constitute a glutathione peroxidase-like protective system against oxidative stresses. The sequence is that of Glutathione peroxidase 1 (gpx-1) from Caenorhabditis elegans.